We begin with the raw amino-acid sequence, 156 residues long: Mitochondrial translation release factor in rescue (156 aa).

A GGQ domain region spans residues 44–108; that stretch reads EEELEEQFVR…LREKLEVAYK (65 aa). Residues 58–60 carry the GGQ motif; the sequence is GGQ. Residues 100-141 adopt a coiled-coil conformation; it reads REKLEVAYKGEESELLKMKKESMQKKQDKRRKVNENIEKKRR. Basic and acidic residues-rich tracts occupy residues 114-125 and 132-156; these read LLKMKKESMQKK and VNEN…DKST. A disordered region spans residues 114-156; sequence LLKMKKESMQKKQDKRRKVNENIEKKRRFKEMLNSKQEDDKST.

The protein belongs to the prokaryotic/mitochondrial release factor family. Interacts (via C-terminus) with MTRES1 (via S4 domain). Associates with mitoribosomal S39 large subunit, peptidyl tRNA and nascent chain.

The protein localises to the mitochondrion. Its function is as follows. Part of a mitoribosome-associated quality control pathway that prevents aberrant translation by responding to interruptions during elongation. As heterodimer with MTRES1, ejects the unfinished nascent chain and peptidyl transfer RNA (tRNA), respectively, from stalled ribosomes. Recruitment of mitoribosome biogenesis factors to these quality control intermediates suggests additional roles for MTRES1 and MTRF during mitoribosome rescue. The protein is Mitochondrial translation release factor in rescue (mtrfr) of Danio rerio (Zebrafish).